A 205-amino-acid chain; its full sequence is Probable transcription factor Ken (205 aa).

3 C2H2-type zinc fingers span residues 106-128 (YRCE…LRVH), 134-157 (FACR…CSVH), and 173-196 (YSCC…SGHH).

The protein resides in the nucleus. In terms of biological role, probable transcription factor, which is required for terminalia development. This Drosophila yakuba (Fruit fly) protein is Probable transcription factor Ken (ken).